The chain runs to 158 residues: Protein shisa-like-2B (158 aa).

The chain crosses the membrane as a helical span at residues 65–85; the sequence is IGALVGLGIAALVLLAFVISV.

It belongs to the shisa family.

It is found in the membrane. The sequence is that of Protein shisa-like-2B (Shisal2b) from Mus musculus (Mouse).